We begin with the raw amino-acid sequence, 55 residues long: Conotoxin Cal6.40 (55 aa).

The signal sequence occupies residues 1–21 (MSGSGVLLLTLLLLVPLSALA). Cystine bridges form between cysteine 24/cysteine 36, cysteine 29/cysteine 41, and cysteine 35/cysteine 50.

In terms of tissue distribution, expressed by the venom duct.

Its subcellular location is the secreted. Functionally, probable neurotoxin. In Californiconus californicus (California cone), this protein is Conotoxin Cal6.40.